We begin with the raw amino-acid sequence, 229 residues long: ADP-ribosylation factor-like protein 6-interacting protein 4 (229 aa).

Over residues 1 to 20 (MAHVGSRKRSRSRSRSRSGR) the composition is skewed to basic residues. Positions 1-152 (MAHVGSRKRS…EDNDGPVLTD (152 aa)) are disordered. The segment covering 21 to 35 (RGSEKRSKRSSKDAS) has biased composition (basic and acidic residues). A compositionally biased stretch (low complexity) spans 66-87 (SRSSSTSSSSSSSSSASSSSSS). Residues 90 to 117 (RKKRAKHKEKKRKKKKKKRKKKLKKRVK) show a composition bias toward basic residues. 2 positions are modified to phosphoserine: Ser140 and Ser174. Residue Lys191 forms a Glycyl lysine isopeptide (Lys-Gly) (interchain with G-Cter in SUMO2) linkage.

This sequence belongs to the ARL6IP4 family. As to quaternary structure, interacts with ZCCHC17. Interacts with SRSF2. Interacts with ARL6. As to expression, widely expressed. Expressed at high level in testis and thymus.

Its subcellular location is the nucleus. It is found in the nucleolus. The protein resides in the nucleus speckle. Its function is as follows. Involved in modulating alternative pre-mRNA splicing with either 5' distal site activation or preferential use of 3' proximal site. The protein is ADP-ribosylation factor-like protein 6-interacting protein 4 (Arl6ip4) of Mus musculus (Mouse).